The chain runs to 405 residues: Palmitoyltransferase PFA5 (405 aa).

5 consecutive transmembrane segments (helical) span residues 12–32, 51–71, 154–174, 191–211, and 310–330; these read YIKL…NYAI, IILW…WVLI, LFFM…LIYC, FIVL…LFGI, and FYTL…FIDI. Residues 111-161 form the DHHC domain; sequence YYCSNSNSIKLERSFFSKDVGYNVIKFDHYCIWIGQPIGQDNYLFFMKFMM.

This sequence belongs to the DHHC palmitoyltransferase family. PFA5 subfamily. Post-translationally, autopalmitoylated.

Its subcellular location is the membrane. The enzyme catalyses L-cysteinyl-[protein] + hexadecanoyl-CoA = S-hexadecanoyl-L-cysteinyl-[protein] + CoA. The chain is Palmitoyltransferase PFA5 (PFA5) from Candida albicans (strain SC5314 / ATCC MYA-2876) (Yeast).